Here is a 371-residue protein sequence, read N- to C-terminus: 4-hydroxy-3-methylbut-2-en-1-yl diphosphate synthase (flavodoxin) (371 aa).

Residues Cys270, Cys273, Cys305, and Glu312 each coordinate [4Fe-4S] cluster.

It belongs to the IspG family. The cofactor is [4Fe-4S] cluster.

The catalysed reaction is (2E)-4-hydroxy-3-methylbut-2-enyl diphosphate + oxidized [flavodoxin] + H2O + 2 H(+) = 2-C-methyl-D-erythritol 2,4-cyclic diphosphate + reduced [flavodoxin]. It participates in isoprenoid biosynthesis; isopentenyl diphosphate biosynthesis via DXP pathway; isopentenyl diphosphate from 1-deoxy-D-xylulose 5-phosphate: step 5/6. Its function is as follows. Converts 2C-methyl-D-erythritol 2,4-cyclodiphosphate (ME-2,4cPP) into 1-hydroxy-2-methyl-2-(E)-butenyl 4-diphosphate. The protein is 4-hydroxy-3-methylbut-2-en-1-yl diphosphate synthase (flavodoxin) of Shewanella piezotolerans (strain WP3 / JCM 13877).